A 182-amino-acid polypeptide reads, in one-letter code: Protein SYM1 (182 aa).

3 helical membrane-spanning segments follow: residues 51 to 70 (TLRPFLYGAVLFSLVGDKWY), 98 to 118 (LIFAPIGVPLYYTAMALMEGG), and 135 to 155 (LLANWIVWPAFQLCNFSLVPV).

The protein belongs to the peroxisomal membrane protein PXMP2/4 family.

It is found in the mitochondrion inner membrane. In terms of biological role, may be involved in cellular response to stress. Required to maintain mitochondrial DNA (mtDNA) integrity and stability. This chain is Protein SYM1 (SYM1), found in Eremothecium gossypii (strain ATCC 10895 / CBS 109.51 / FGSC 9923 / NRRL Y-1056) (Yeast).